Here is a 108-residue protein sequence, read N- to C-terminus: UPF0060 membrane protein Nwi_1459 (108 aa).

The next 4 helical transmembrane spans lie at 5-25 (AAYV…WAWL), 31-51 (VWWL…LTLV), 61-81 (AAYG…VEGI), and 88-108 (LAGA…PHEI).

It belongs to the UPF0060 family.

Its subcellular location is the cell inner membrane. The polypeptide is UPF0060 membrane protein Nwi_1459 (Nitrobacter winogradskyi (strain ATCC 25391 / DSM 10237 / CIP 104748 / NCIMB 11846 / Nb-255)).